The primary structure comprises 986 residues: Bifunctional glutamine synthetase adenylyltransferase/adenylyl-removing enzyme (986 aa).

The interval 1–470 (MAAVAKRTVT…ERHYAALFET (470 aa)) is adenylyl removase. The adenylyl transferase stretch occupies residues 476–986 (AGIGNLVFTG…FDLLLRAGRP (511 aa)).

The protein belongs to the GlnE family. It depends on Mg(2+) as a cofactor.

The catalysed reaction is [glutamine synthetase]-O(4)-(5'-adenylyl)-L-tyrosine + phosphate = [glutamine synthetase]-L-tyrosine + ADP. It carries out the reaction [glutamine synthetase]-L-tyrosine + ATP = [glutamine synthetase]-O(4)-(5'-adenylyl)-L-tyrosine + diphosphate. Involved in the regulation of glutamine synthetase GlnA, a key enzyme in the process to assimilate ammonia. When cellular nitrogen levels are high, the C-terminal adenylyl transferase (AT) inactivates GlnA by covalent transfer of an adenylyl group from ATP to specific tyrosine residue of GlnA, thus reducing its activity. Conversely, when nitrogen levels are low, the N-terminal adenylyl removase (AR) activates GlnA by removing the adenylyl group by phosphorolysis, increasing its activity. The regulatory region of GlnE binds the signal transduction protein PII (GlnB) which indicates the nitrogen status of the cell. In Mesorhizobium japonicum (strain LMG 29417 / CECT 9101 / MAFF 303099) (Mesorhizobium loti (strain MAFF 303099)), this protein is Bifunctional glutamine synthetase adenylyltransferase/adenylyl-removing enzyme.